The chain runs to 319 residues: MRRAVVIGTGSALPRRQVSNAELARTVDTSDEWIVERTGIRNRYVAGEGETTSTLATEAARKAIEAAGIAPSDIGLIILATATPDQTFPASATMVQAALGIGDCVAFDVQAVCSGFLYALSVADSMIRGGSATHALVIGAETFSRILDWEDRTTCVLFGDGAGAVVLKAEEGGDRGVLATRLHADGRHNQLLYVDGGPSTTQTVGKLRMKGQEVFRHAVTNLAQVLREVMGDAGLTVDDIDWVVPHQANRRILDATARKLGLPAERVIVTVDQHANTSAASVPLALDVAVRDGRIKPGDLLVLEAMGGGFTWGAAAIRY.

Residues Cys-113 and His-246 contribute to the active site. The interval 247–251 is ACP-binding; the sequence is QANRR. Asn-276 is a catalytic residue.

This sequence belongs to the thiolase-like superfamily. FabH family. In terms of assembly, homodimer.

It localises to the cytoplasm. It carries out the reaction malonyl-[ACP] + acetyl-CoA + H(+) = 3-oxobutanoyl-[ACP] + CO2 + CoA. It participates in lipid metabolism; fatty acid biosynthesis. Its function is as follows. Catalyzes the condensation reaction of fatty acid synthesis by the addition to an acyl acceptor of two carbons from malonyl-ACP. Catalyzes the first condensation reaction which initiates fatty acid synthesis and may therefore play a role in governing the total rate of fatty acid production. Possesses both acetoacetyl-ACP synthase and acetyl transacylase activities. Its substrate specificity determines the biosynthesis of branched-chain and/or straight-chain of fatty acids. This Rhizorhabdus wittichii (strain DSM 6014 / CCUG 31198 / JCM 15750 / NBRC 105917 / EY 4224 / RW1) (Sphingomonas wittichii) protein is Beta-ketoacyl-[acyl-carrier-protein] synthase III.